The chain runs to 234 residues: Probable GTP-binding protein EngB (234 aa).

One can recognise an EngB-type G domain in the interval 23–209 (AVPEVAFAGR…QRTVAGWLCL (187 aa)). Residues 31 to 38 (GRSNAGKS), 58 to 62 (GRTQH), 82 to 85 (DLPG), 149 to 152 (TKAD), and 187 to 190 (LFSS) contribute to the GTP site. Positions 38 and 60 each coordinate Mg(2+). A disordered region spans residues 210 to 234 (PEAMPPSPDAEPAKKTPSPDAQRGE).

The protein belongs to the TRAFAC class TrmE-Era-EngA-EngB-Septin-like GTPase superfamily. EngB GTPase family. It depends on Mg(2+) as a cofactor.

In terms of biological role, necessary for normal cell division and for the maintenance of normal septation. This chain is Probable GTP-binding protein EngB, found in Ralstonia nicotianae (strain ATCC BAA-1114 / GMI1000) (Ralstonia solanacearum).